The sequence spans 226 residues: Chalcone--flavanone isomerase 1B-2 (226 aa).

The substrate site is built by T50, N115, and T192.

It belongs to the chalcone isomerase family. Expressed in roots, shoots, flowers and seeds.

The catalysed reaction is a chalcone = a flavanone.. The protein operates within secondary metabolite biosynthesis; flavonoid biosynthesis. Catalyzes the intramolecular cyclization of bicyclic chalcones into tricyclic (S)-flavanones. Responsible for the isomerization of 4,2',4',6'-tetrahydroxychalcone (also termed chalcone) into naringenin. This Glycine max (Soybean) protein is Chalcone--flavanone isomerase 1B-2 (CHI1B2).